The primary structure comprises 60 residues: Translational regulator CsrA (60 aa).

The protein belongs to the CsrA/RsmA family. As to quaternary structure, homodimer; the beta-strands of each monomer intercalate to form a hydrophobic core, while the alpha-helices form wings that extend away from the core.

The protein resides in the cytoplasm. A key translational regulator that binds mRNA to regulate translation initiation and/or mRNA stability. Mediates global changes in gene expression, shifting from rapid growth to stress survival by linking envelope stress, the stringent response and the catabolite repression systems. Usually binds in the 5'-UTR; binding at or near the Shine-Dalgarno sequence prevents ribosome-binding, repressing translation, binding elsewhere in the 5'-UTR can activate translation and/or stabilize the mRNA. Its function is antagonized by small RNA(s). The polypeptide is Translational regulator CsrA (Histophilus somni (strain 2336) (Haemophilus somnus)).